The following is a 344-amino-acid chain: Uroporphyrinogen decarboxylase (344 aa).

Substrate-binding positions include 23 to 27, Asp73, Tyr149, Thr204, and His321; that span reads RQAGR.

It belongs to the uroporphyrinogen decarboxylase family. Homodimer.

The protein resides in the cytoplasm. It carries out the reaction uroporphyrinogen III + 4 H(+) = coproporphyrinogen III + 4 CO2. The protein operates within porphyrin-containing compound metabolism; protoporphyrin-IX biosynthesis; coproporphyrinogen-III from 5-aminolevulinate: step 4/4. Catalyzes the decarboxylation of four acetate groups of uroporphyrinogen-III to yield coproporphyrinogen-III. This chain is Uroporphyrinogen decarboxylase, found in Francisella tularensis subsp. mediasiatica (strain FSC147).